The chain runs to 273 residues: Large ribosomal subunit protein uL2cz/uL2cy (273 aa).

Disordered stretches follow at residues 1-27 (MAKHLYKTPIPSTRKGTVDRQVKSNPR) and 225-273 (PVDH…RRRK).

It belongs to the universal ribosomal protein uL2 family. As to quaternary structure, part of the 50S ribosomal subunit.

The protein resides in the plastid. Its subcellular location is the chloroplast. The protein is Large ribosomal subunit protein uL2cz/uL2cy (rpl2-A) of Lolium perenne (Perennial ryegrass).